Reading from the N-terminus, the 111-residue chain is Elevenin (111 aa).

An N-terminal signal peptide occupies residues 1–24 (MAPSQKALLVLVLSMLLTASDSRA). Cysteines 29 and 38 form a disulfide. Residues 44-111 (KRGGDSLSVG…TEQLDRLLTL (68 aa)) constitute a propeptide that is removed on maturation.

The protein belongs to the elevenin family. As to quaternary structure, monomer. As to expression, expressed by the venom duct.

The protein localises to the secreted. Its function is as follows. May mimic the function of prey elevenin neuropeptide. In vivo, intracranial injection in mice induces hyperactivity. In Conus ebraeus (Hebrew cone), this protein is Elevenin.